The sequence spans 579 residues: Zinc finger protein 382 (579 aa).

Residues 1 to 12 (MGRPGRKPRGRA) show a composition bias toward basic residues. The interval 1-37 (MGRPGRKPRGRARPGLFPFPKEELRQGGSSPANLNAM) is disordered. Residues 12–135 (ARPGLFPFPK…DKPPKSIVII (124 aa)) form a mediates interaction with TRIM28 region. Over residues 27-36 (GGSSPANLNA) the composition is skewed to polar residues. 2 represses transcription regions span residues 40–81 (GPVS…FISV) and 105–240 (IFPS…PEQR). One can recognise a KRAB domain in the interval 42-113 (VSFKDVTVDF…RIFPSQSYLE (72 aa)). Residues 241–263 (FEYNKCDSSFLMTGVEFPHGRAH) form a C2H2-type 1; degenerate zinc finger. C2H2-type zinc fingers lie at residues 325–347 (FQCP…ERIH), 353–375 (YICC…EKTH), 381–403 (YLCV…HKAH), 409–431 (YECT…QRTH), 437–459 (YQCT…QRTH), 465–487 (YICS…QRIH), 493–515 (YICS…YRIH), 521–543 (NGCP…QKIH), and 549–571 (YECQ…QKTH). Positions 325–579 (FQCPYCGNSF…THKTETMRFQ (255 aa)) are required for transcriptional repression activity; probably mediates sequence-specific DNA-binding.

This sequence belongs to the krueppel C2H2-type zinc-finger protein family. Interacts with TRIM28; enhances the transcriptional repressor activity.

It is found in the nucleus. Functions as a sequence-specific transcriptional repressor. The sequence is that of Zinc finger protein 382 (Znf382) from Mus musculus (Mouse).